The primary structure comprises 473 residues: Kremen protein 1 (473 aa).

Positions M1–A19 are cleaved as a signal peptide. Residues R21–T392 are Extracellular-facing. A Kringle domain is found at E31–C114. Intrachain disulfides connect C32–C114, C55–C95, C84–C109, C122–C186, C147–C167, C151–C169, C190–C198, and C214–C240. N-linked (GlcNAc...) asparagine glycosylation is present at N59. In terms of domain architecture, WSC spans M116–L210. Positions C214 to T321 constitute a CUB domain. N-linked (GlcNAc...) asparagine glycans are attached at residues N217, N255, N293, N333, and N345. Residues V393 to L413 traverse the membrane as a helical segment. Residues H414–D473 lie on the Cytoplasmic side of the membrane. The segment at H414 to D473 is essential for apoptotic activity.

As to quaternary structure, forms a ternary complex with DKK1 and LRP6. Interacts with LRP6 in a DKK1-dependent manner. Interacts with DKK1 and RSPO1 (via FU repeats). In the adult, widely expressed with high levels in heart, lung, kidney, skeletal muscle and testis.

It is found in the cell membrane. In terms of biological role, receptor for Dickkopf proteins. Cooperates with DKK1/2 to inhibit Wnt/beta-catenin signaling by promoting the endocytosis of Wnt receptors LRP5 and LRP6. In the absence of DKK1, potentiates Wnt-beta-catenin signaling by maintaining LRP5 or LRP6 at the cell membrane. Can trigger apoptosis in a Wnt-independent manner and this apoptotic activity is inhibited upon binding of the ligand DKK1. Plays a role in limb development; attenuates Wnt signaling in the developing limb to allow normal limb patterning and can also negatively regulate bone formation. Modulates cell fate decisions in the developing cochlea with an inhibitory role in hair cell fate specification. This is Kremen protein 1 (Kremen1) from Mus musculus (Mouse).